Here is a 443-residue protein sequence, read N- to C-terminus: Mitochondrial distribution and morphology protein 10 (443 aa).

This sequence belongs to the MDM10 family. Component of the ER-mitochondria encounter structure (ERMES) or MDM complex, composed of MMM1, MDM10, MDM12 and MDM34. Associates with the mitochondrial outer membrane sorting assembly machinery SAM(core) complex.

The protein resides in the mitochondrion outer membrane. Functionally, component of the ERMES/MDM complex, which serves as a molecular tether to connect the endoplasmic reticulum and mitochondria. Components of this complex are involved in the control of mitochondrial shape and protein biogenesis and may function in phospholipid exchange. MDM10 is involved in the late assembly steps of the general translocase of the mitochondrial outer membrane (TOM complex). Functions in the TOM40-specific route of the assembly of outer membrane beta-barrel proteins, including the association of TOM40 with the receptor TOM22 and small TOM proteins. Can associate with the SAM(core) complex as well as the MDM12-MMM1 complex, both involved in late steps of the major beta-barrel assembly pathway, that is responsible for biogenesis of all outer membrane beta-barrel proteins. May act as a switch that shuttles between both complexes and channels precursor proteins into the TOM40-specific pathway. Plays a role in mitochondrial morphology and in the inheritance of mitochondria. This chain is Mitochondrial distribution and morphology protein 10, found in Pyricularia oryzae (strain 70-15 / ATCC MYA-4617 / FGSC 8958) (Rice blast fungus).